Consider the following 422-residue polypeptide: Replication factor C large subunit (422 aa).

63–70 (GPPGVGKT) contributes to the ATP binding site.

The protein belongs to the activator 1 small subunits family. RfcL subfamily. In terms of assembly, heteromultimer composed of small subunits (RfcS) and large subunits (RfcL).

Its function is as follows. Part of the RFC clamp loader complex which loads the PCNA sliding clamp onto DNA. The protein is Replication factor C large subunit of Pyrobaculum arsenaticum (strain DSM 13514 / JCM 11321 / PZ6).